Reading from the N-terminus, the 751-residue chain is Catalase-peroxidase (751 aa).

The signal sequence occupies residues 1–12; sequence MSNETKCPFSHA. Residues 91 to 241 constitute a cross-link (tryptophyl-tyrosyl-methioninium (Trp-Tyr) (with M-267)); sequence WHSAGTYRIG…LAAVQMGLIY (151 aa). H92 serves as the catalytic Proton acceptor. The segment at residues 241–267 is a cross-link (tryptophyl-tyrosyl-methioninium (Tyr-Met) (with W-91)); the sequence is YVNPEGPDGNPDPLAAAHDIRESFGRM. H282 contacts heme b.

The protein belongs to the peroxidase family. Peroxidase/catalase subfamily. Homodimer or homotetramer. It depends on heme b as a cofactor. Formation of the three residue Trp-Tyr-Met cross-link is important for the catalase, but not the peroxidase activity of the enzyme.

It carries out the reaction H2O2 + AH2 = A + 2 H2O. The catalysed reaction is 2 H2O2 = O2 + 2 H2O. In terms of biological role, bifunctional enzyme with both catalase and broad-spectrum peroxidase activity. This chain is Catalase-peroxidase, found in Cupriavidus necator (strain ATCC 17699 / DSM 428 / KCTC 22496 / NCIMB 10442 / H16 / Stanier 337) (Ralstonia eutropha).